Reading from the N-terminus, the 84-residue chain is Large ribosomal subunit protein bL28 (84 aa).

Belongs to the bacterial ribosomal protein bL28 family.

The polypeptide is Large ribosomal subunit protein bL28 (Deinococcus geothermalis (strain DSM 11300 / CIP 105573 / AG-3a)).